Reading from the N-terminus, the 633-residue chain is Probable potassium transport system protein Kup 2 (633 aa).

A run of 12 helical transmembrane segments spans residues 18–38 (FLAL…TSPL), 61–81 (LVSL…VLFL), 107–127 (PVLM…DAMI), 143–163 (VAPA…LLLF), 173–193 (VSVF…AAGV), 211–231 (AIGF…AIFL), 255–275 (WFAV…ALVL), 287–307 (LMFP…ATII), 345–365 (IYLP…MLMF), 371–391 (LAPA…ILAF), 402–422 (ALTA…FLGA), and 427–447 (VHHG…MMWT).

It belongs to the HAK/KUP transporter (TC 2.A.72) family.

It localises to the cell inner membrane. It carries out the reaction K(+)(in) + H(+)(in) = K(+)(out) + H(+)(out). Transport of potassium into the cell. Likely operates as a K(+):H(+) symporter. This is Probable potassium transport system protein Kup 2 from Rhizobium meliloti (strain 1021) (Ensifer meliloti).